A 745-amino-acid chain; its full sequence is Dipeptidyl aminopeptidase 4 (745 aa).

The signal sequence occupies residues 1 to 22; sequence MRLALFALFALMTVATALPAHA. Substrate is bound by residues Glu208 and Glu209. Residues Ser613, Asp689, and His721 each act as charge relay system in the active site.

Belongs to the peptidase S9B family. As to quaternary structure, homodimer.

The protein localises to the cytoplasm. Its subcellular location is the periplasm. The enzyme catalyses Release of an N-terminal dipeptide, Xaa-Yaa-|-Zaa-, from a polypeptide, preferentially when Yaa is Pro, provided Zaa is neither Pro nor hydroxyproline.. Its activity is regulated as follows. Completely inhibited by the serine protease inhibitor diisopropyl fluorophosphate (DFP) and moderately by N-tosyl-L-phenyl-alanyl chloromethyl ketone (TPCK). Somewhat inhibited by phenylmethanesulfonyl fluoride (PMSF). Activity is not affected by thiol- or metalloprotease inhibitors, such as iodoacetate (IAA), EDTA, N-tosyl-L-lysyl chloromethyl ketone (TLCK), o-phenanthlorine, N-ethylmaleimide (NEM) or dithiothreitol (DTT). Functionally, catalyzes the sequential release of Tyr-Pro, Phe-Pro and Gly-Pro from the N-terminus of peptides and proteins. Is able to cleaves bioactive peptide beta-casomorphin. The polypeptide is Dipeptidyl aminopeptidase 4 (Pseudoxanthomonas mexicana).